The chain runs to 310 residues: Hydroxyacylglutathione hydrolase, mitochondrial (310 aa).

Zn(2+)-binding residues include H104, H106, D108, H109, H160, and D184. Residues 193-195, 223-225, and 299-302 contribute to the substrate site; these read KFF, HEY, and RKEK. H223 is a binding site for Zn(2+).

It belongs to the metallo-beta-lactamase superfamily. Glyoxalase II family. Monomer. The cofactor is Zn(2+).

The protein localises to the mitochondrion matrix. It localises to the cytoplasm. It catalyses the reaction an S-(2-hydroxyacyl)glutathione + H2O = a 2-hydroxy carboxylate + glutathione + H(+). It carries out the reaction (R)-S-lactoylglutathione + H2O = (R)-lactate + glutathione + H(+). Thiolesterase that catalyzes the hydrolysis of S-D-lactoyl-glutathione to form glutathione and D-lactic acid. The sequence is that of Hydroxyacylglutathione hydrolase, mitochondrial (HAGH) from Gallus gallus (Chicken).